We begin with the raw amino-acid sequence, 171 residues long: MEPSPALAWLLLLSLVADCLKAAQSRDFTVKDIIYLHPSTTPYPGGFKCFTCEKAADNYECNRWAPDIYCPRDTRYCYTQHTMEVTGNSISVTKRCVPLEECLSTGCRDSEHEGYKICTSCCEGNICNLPLPRNETDATFATTSPINQTNGHPHCVSVIVSCLWVWLGLTL.

Residues methionine 1–serine 25 form the signal peptide. The region spanning phenylalanine 47–alanine 141 is the UPAR/Ly6 domain. Disulfide bonds link cysteine 49-cysteine 77, cysteine 52-cysteine 61, cysteine 70-cysteine 96, cysteine 102-cysteine 121, cysteine 107-cysteine 118, and cysteine 122-cysteine 127. The NxI motif signature appears at asparagine 88–isoleucine 90. Residues asparagine 134 and asparagine 147 are each glycosylated (N-linked (GlcNAc...) asparagine). Residue asparagine 147 is the site of GPI-anchor amidated asparagine attachment. The propeptide at glutamine 148–leucine 171 is removed in mature form.

As to quaternary structure, interacts with nicotinic acetylcholine receptors (nAChRs) including CHRNA3, CHRNA4, CHRNA5, CHRNA6, CHRNA7, CHRNB2 and CHRNB4. Interacts (via NxI motif) with LRP6. Detected in the frontal cortex and hippocampus (at protein level). Highly expressed in the brain and spinal cord, as well as dorsal root and trigeminal ganglia.

Its subcellular location is the secreted. The protein resides in the cytoplasm. The protein localises to the cell membrane. It localises to the synapse. It is found in the synaptosome. Its subcellular location is the membrane raft. The protein resides in the cell projection. The protein localises to the dendrite. It localises to the perikaryon. Its function is as follows. Acts as a modulator of nicotinic acetylcholine receptors (nAChRs) function in the brain. Inhibits nicotine-induced Ca(2+) influx through nAChRs. In vitro, specifically inhibits alpha-3:beta-4 and alpha-7 nAChR currents in an allosteric manner. Acts as a positive regulator of Wnt/beta-catenin signaling. In Mus musculus (Mouse), this protein is Ly6/PLAUR domain-containing protein 6 (Lypd6).